The following is a 366-amino-acid chain: Flagellar P-ring protein (366 aa).

Positions 1-20 (MVIKFLSALILLLVTTAAQA) are cleaved as a signal peptide.

This sequence belongs to the FlgI family. The basal body constitutes a major portion of the flagellar organelle and consists of four rings (L,P,S, and M) mounted on a central rod.

The protein localises to the periplasm. The protein resides in the bacterial flagellum basal body. In terms of biological role, assembles around the rod to form the L-ring and probably protects the motor/basal body from shearing forces during rotation. This chain is Flagellar P-ring protein, found in Escherichia coli (strain SE11).